The following is a 499-amino-acid chain: Apolipoprotein N-acyltransferase (499 aa).

Transmembrane regions (helical) follow at residues 9-29, 50-70, 77-97, 114-134, 148-168, and 183-203; these read LLLG…PALL, LGYI…SIGV, FWWA…FFVS, FIFC…FTGL, ILIQ…VIYI, and LKVL…YGSV. The CN hydrolase domain maps to 220–464; sequence VQPSIPQTEK…DGLIPKKLDS (245 aa). Glu259 functions as the Proton acceptor in the catalytic mechanism. The active site involves Lys322. Residue Cys372 is the Nucleophile of the active site. The helical transmembrane segment at 466-486 threads the bilayer; sequence TIFSKFGNITILLIVFFIFLV.

This sequence belongs to the CN hydrolase family. Apolipoprotein N-acyltransferase subfamily.

It localises to the cell inner membrane. The catalysed reaction is N-terminal S-1,2-diacyl-sn-glyceryl-L-cysteinyl-[lipoprotein] + a glycerophospholipid = N-acyl-S-1,2-diacyl-sn-glyceryl-L-cysteinyl-[lipoprotein] + a 2-acyl-sn-glycero-3-phospholipid + H(+). It functions in the pathway protein modification; lipoprotein biosynthesis (N-acyl transfer). Its function is as follows. Catalyzes the phospholipid dependent N-acylation of the N-terminal cysteine of apolipoprotein, the last step in lipoprotein maturation. This Rickettsia bellii (strain RML369-C) protein is Apolipoprotein N-acyltransferase.